A 171-amino-acid polypeptide reads, in one-letter code: Probable deoxyuridine 5'-triphosphate nucleotidohydrolase (171 aa).

It belongs to the dCTP deaminase family. Archaeal dUTPase subfamily.

It carries out the reaction dUTP + H2O = dUMP + diphosphate + H(+). It functions in the pathway pyrimidine metabolism; dUMP biosynthesis; dUMP from dCTP (dUTP route): step 2/2. Functionally, this enzyme is involved in nucleotide metabolism: it produces dUMP, the immediate precursor of thymidine nucleotides and it decreases the intracellular concentration of dUTP so that uracil cannot be incorporated into DNA. This chain is Probable deoxyuridine 5'-triphosphate nucleotidohydrolase, found in Methanosarcina acetivorans (strain ATCC 35395 / DSM 2834 / JCM 12185 / C2A).